The following is a 673-amino-acid chain: UvrABC system protein B (673 aa).

The Helicase ATP-binding domain occupies 26–183 (EGLEDGLAHQ…RRLAELQYTR (158 aa)). 39 to 46 (GVTGSGKT) lines the ATP pocket. The short motif at 92–115 (YYDYYQPEAYVPSSDTFIEKDASV) is the Beta-hairpin element. The Helicase C-terminal domain maps to 431–597 (QVDDLLSEIR…GLNKKVVDIL (167 aa)). Positions 608–627 (AKGRGKSRPIVEPDNVPMDM) are disordered. One can recognise a UVR domain in the interval 633–668 (QQKIHELEGLMMQHAQNLEFEEAAQIRDQLHQLREL).

It belongs to the UvrB family. As to quaternary structure, forms a heterotetramer with UvrA during the search for lesions. Interacts with UvrC in an incision complex.

The protein resides in the cytoplasm. Functionally, the UvrABC repair system catalyzes the recognition and processing of DNA lesions. A damage recognition complex composed of 2 UvrA and 2 UvrB subunits scans DNA for abnormalities. Upon binding of the UvrA(2)B(2) complex to a putative damaged site, the DNA wraps around one UvrB monomer. DNA wrap is dependent on ATP binding by UvrB and probably causes local melting of the DNA helix, facilitating insertion of UvrB beta-hairpin between the DNA strands. Then UvrB probes one DNA strand for the presence of a lesion. If a lesion is found the UvrA subunits dissociate and the UvrB-DNA preincision complex is formed. This complex is subsequently bound by UvrC and the second UvrB is released. If no lesion is found, the DNA wraps around the other UvrB subunit that will check the other stand for damage. This Escherichia fergusonii (strain ATCC 35469 / DSM 13698 / CCUG 18766 / IAM 14443 / JCM 21226 / LMG 7866 / NBRC 102419 / NCTC 12128 / CDC 0568-73) protein is UvrABC system protein B.